Reading from the N-terminus, the 189-residue chain is Ribosome-recycling factor (189 aa).

This sequence belongs to the RRF family.

It is found in the cytoplasm. Functionally, responsible for the release of ribosomes from messenger RNA at the termination of protein biosynthesis. May increase the efficiency of translation by recycling ribosomes from one round of translation to another. This is Ribosome-recycling factor from Salinibacter ruber (strain DSM 13855 / M31).